The following is a 359-amino-acid chain: Glycogen synthase kinase-3 (359 aa).

One can recognise a Protein kinase domain in the interval tyrosine 36–phenylalanine 320. ATP contacts are provided by residues isoleucine 42–valine 50 and lysine 65. The Proton acceptor role is filled by aspartate 161. The interval leucine 330 to alanine 359 is disordered.

The protein belongs to the protein kinase superfamily. CMGC Ser/Thr protein kinase family. GSK-3 subfamily. Monomer. Interacts with axl-1.

The catalysed reaction is L-seryl-[tau protein] + ATP = O-phospho-L-seryl-[tau protein] + ADP + H(+). It carries out the reaction L-threonyl-[tau protein] + ATP = O-phospho-L-threonyl-[tau protein] + ADP + H(+). Functionally, phosphorylates oma-1, a regulator of the oocyte-to-embryo transition, enabling its degradation. Phosphorylates skn-1, preventing it from accumulating in nuclei and thus inhibiting phase II gene expression in the oxidative stress defense. Involved in mesendoderm specification and mitotic spindle orientation in EMS blastomeres. Thought to be a branch point in these processes as proteins downstream are not required. Negatively regulates Wnt signaling in vulval precursor cells and acts as a Wnt-independent repressor of med-1 and med-2 in the C lineage inhibiting mesoderm development. Required for normal lifespan and LiCl-induced lifespan extension. In Caenorhabditis briggsae, this protein is Glycogen synthase kinase-3 (gsk-3).